Reading from the N-terminus, the 193-residue chain is Adenine phosphoribosyltransferase (193 aa).

This sequence belongs to the purine/pyrimidine phosphoribosyltransferase family. In terms of assembly, homodimer.

It is found in the cytoplasm. The catalysed reaction is AMP + diphosphate = 5-phospho-alpha-D-ribose 1-diphosphate + adenine. It functions in the pathway purine metabolism; AMP biosynthesis via salvage pathway; AMP from adenine: step 1/1. Catalyzes a salvage reaction resulting in the formation of AMP, that is energically less costly than de novo synthesis. The polypeptide is Adenine phosphoribosyltransferase (Bifidobacterium longum (strain DJO10A)).